A 94-amino-acid chain; its full sequence is Alpha-conotoxin-like Cp20.2 (94 aa).

An N-terminal signal peptide occupies residues 1 to 24 (MPKLAVVLLVLLILPLSYFDAAGG). A propeptide spanning residues 25–45 (QAVQWDRRGNGLARYLQRGDR) is cleaved from the precursor. Disulfide bonds link cysteine 63–cysteine 72, cysteine 68–cysteine 80, cysteine 73–cysteine 90, and cysteine 78–cysteine 92.

The protein belongs to the conotoxin D superfamily. As to quaternary structure, hetero-, homo- or pseudo-homodimer (identical sequence, different post-translational modifications). Expressed by the venom duct.

The protein localises to the secreted. Its function is as follows. Alpha-conotoxins act on postsynaptic membranes, they bind to the nicotinic acetylcholine receptors (nAChR) and thus inhibit them. Through its two C-terminal domains, this homodimeric protein would bind to two nAChR allosteric sites, located outside the nAChR C-loop of the principal binding face and at the adjacent binding interface in a clockwise direction. This toxin specifically blocks mammalian neuronal nAChR of the alpha-7/CHRNA7, alpha-3-beta-2/CHRNA3-CHRNB2 and alpha-4-beta-2/CHRNA4-CHRNB2 subtypes. The protein is Alpha-conotoxin-like Cp20.2 of Conus capitaneus (Captain cone).